Consider the following 165-residue polypeptide: Phosphopantetheine adenylyltransferase (165 aa).

Residue T9 participates in substrate binding. ATP is bound by residues 9–10 and H17; that span reads TF. K41, L73, and R87 together coordinate substrate. ATP contacts are provided by residues 88–90, E98, and 123–129; these read GLR and YQFISGT.

This sequence belongs to the bacterial CoaD family. Homohexamer. The cofactor is Mg(2+).

Its subcellular location is the cytoplasm. It carries out the reaction (R)-4'-phosphopantetheine + ATP + H(+) = 3'-dephospho-CoA + diphosphate. The protein operates within cofactor biosynthesis; coenzyme A biosynthesis; CoA from (R)-pantothenate: step 4/5. In terms of biological role, reversibly transfers an adenylyl group from ATP to 4'-phosphopantetheine, yielding dephospho-CoA (dPCoA) and pyrophosphate. In Burkholderia orbicola (strain MC0-3), this protein is Phosphopantetheine adenylyltransferase.